Consider the following 72-residue polypeptide: Large ribosomal subunit protein bL32c (72 aa).

A disordered region spans residues 49–72 (PPAPVSENWDDEAKGFGKDLDAAE). A compositionally biased stretch (basic and acidic residues) spans 59–72 (DEAKGFGKDLDAAE).

Belongs to the bacterial ribosomal protein bL32 family.

The protein localises to the plastid. It is found in the chloroplast. This Ostreococcus tauri protein is Large ribosomal subunit protein bL32c.